Here is a 608-residue protein sequence, read N- to C-terminus: Microtubule-associated protein 70-3 (608 aa).

The segment at methionine 1 to valine 23 is disordered. Positions aspartate 40–lysine 346 form a coiled coil. The tract at residues isoleucine 224 to valine 458 is required for targeting to microtubules. Disordered stretches follow at residues leucine 354–asparagine 493 and aspartate 570–glutamine 608. A compositionally biased stretch (polar residues) spans serine 363 to proline 379. Low complexity predominate over residues arginine 402–leucine 421. Over residues isoleucine 476–asparagine 493 the composition is skewed to polar residues. Residues leucine 542 to lysine 576 are a coiled coil. Positions threonine 586 to glutamine 608 are enriched in low complexity.

Belongs to the MAP70 family.

The protein localises to the cytoplasm. The protein resides in the cytoskeleton. Plant-specific protein that interact with microtubules. The chain is Microtubule-associated protein 70-3 (MAP70.3) from Oryza sativa subsp. japonica (Rice).